The sequence spans 218 residues: Peptidase E (218 aa).

Active-site charge relay system residues include S123, D138, and H160.

It belongs to the peptidase S51 family.

It is found in the cytoplasm. The enzyme catalyses Dipeptidase E catalyzes the hydrolysis of dipeptides Asp-|-Xaa. It does not act on peptides with N-terminal Glu, Asn or Gln, nor does it cleave isoaspartyl peptides.. Its function is as follows. Hydrolyzes dipeptides containing N-terminal aspartate residues. May play a role in allowing the cell to use peptide aspartate to spare carbon otherwise required for the synthesis of the aspartate family of amino acids. This is Peptidase E from Haemophilus influenzae (strain ATCC 51907 / DSM 11121 / KW20 / Rd).